A 238-amino-acid polypeptide reads, in one-letter code: 1-(5-phosphoribosyl)-5-[(5-phosphoribosylamino)methylideneamino] imidazole-4-carboxamide isomerase (238 aa).

The Proton acceptor role is filled by Asp8. Asp129 functions as the Proton donor in the catalytic mechanism.

It belongs to the HisA/HisF family.

It is found in the cytoplasm. The catalysed reaction is 1-(5-phospho-beta-D-ribosyl)-5-[(5-phospho-beta-D-ribosylamino)methylideneamino]imidazole-4-carboxamide = 5-[(5-phospho-1-deoxy-D-ribulos-1-ylimino)methylamino]-1-(5-phospho-beta-D-ribosyl)imidazole-4-carboxamide. It functions in the pathway amino-acid biosynthesis; L-histidine biosynthesis; L-histidine from 5-phospho-alpha-D-ribose 1-diphosphate: step 4/9. The polypeptide is 1-(5-phosphoribosyl)-5-[(5-phosphoribosylamino)methylideneamino] imidazole-4-carboxamide isomerase (Clostridium novyi (strain NT)).